Consider the following 282-residue polypeptide: ESX-1 secretion-associated protein EspG1 (282 aa).

The protein belongs to the EspG family. As to quaternary structure, interacts specifically with ESX-1-dependent PE/PPE proteins.

It localises to the cytoplasm. In terms of biological role, part of the ESX-1 / type VII specialized secretion system (T7SS), which exports several proteins including EsxA and EsxB. Specific chaperone for cognate PE/PPE proteins, plays an important role in preventing aggregation of PE/PPE dimers. Also plays a role in DNA conjugation, in at least recipient strain. This is ESX-1 secretion-associated protein EspG1 from Mycolicibacterium smegmatis (strain ATCC 700084 / mc(2)155) (Mycobacterium smegmatis).